A 228-amino-acid chain; its full sequence is MGEPQQVSALPIPPMQYIKEYTDENIRKSLAPKPPVPIKDSYMMFGNQFQCDDLIIRPLETQGIERLHPVQFDHKKELRKLLMSILVNFLDMLDILIRSPGSIRREEKLEDLKLLFVHMHHLINEYRPHQARETLRVMMEVQKRQRLETAERFQKHLERVVEMIQNCLASLPDDLPLPDGTVSVKTEPMDVQEPCTDHHEGPQGAAASVKEATIDKDAAMCGIIDEMT.

This sequence belongs to the Mediator complex subunit 7 family. In terms of assembly, component of the Mediator complex.

It is found in the nucleus. In terms of biological role, component of the Mediator complex, a coactivator involved in the regulated transcription of nearly all RNA polymerase II-dependent genes. Mediator functions as a bridge to convey information from gene-specific regulatory proteins to the basal RNA polymerase II transcription machinery. Mediator is recruited to promoters by direct interactions with regulatory proteins and serves as a scaffold for the assembly of a functional preinitiation complex with RNA polymerase II and the general transcription factors. The chain is Mediator of RNA polymerase II transcription subunit 7-A (med7-a) from Xenopus laevis (African clawed frog).